The chain runs to 351 residues: Caveolin-2 (351 aa).

A compositionally biased stretch (polar residues) spans 1–14 (MTRQNTSESDNTQR). Disordered regions lie at residues 1 to 55 (MTRQ…QGIA), 71 to 93 (HRTS…YDNL), and 144 to 193 (QKGS…PEME). The Cytoplasmic segment spans residues 1–261 (MTRQNTSESD…FEIVRIYSYK (261 aa)). Positions 22–31 (TVDDIDELTD) are enriched in acidic residues. The span at 38 to 51 (HHHHHHHHEHHHQH) shows a compositional bias: basic residues. The segment covering 167–184 (PAQQSAPPTQQSRPQTTS) has biased composition (low complexity). Positions 262-290 (ILTLIFGLIIAFLGGILFALFAFLNIWIF) form an intramembrane region, helical. The Cytoplasmic portion of the chain corresponds to 291-351 (RPILILTRMA…EVWEKHIHHV (61 aa)).

Belongs to the caveolin family. Homooligomer. As to expression, expressed in intracellular bodies in intestinal cells.

It localises to the golgi apparatus membrane. Its subcellular location is the cell membrane. The protein resides in the membrane. The protein localises to the caveola. It is found in the apical cell membrane. Its function is as follows. May act as a scaffolding protein within caveolar membranes. Interacts directly with G-protein alpha subunits and can regulate their activity. Thought to have a role in the uptake of lipids and proteins in the intestinal cells; operates in the apical uptake of lipid markers and trafficking of yolk proteins. Affects fecundity and egg laying. The chain is Caveolin-2 (cav-2) from Caenorhabditis elegans.